The primary structure comprises 265 residues: uncharacterized protein (265 aa).

The first 20 residues, 1–20 (MSRAMALFFVLCWIQDEIVL), serve as a signal peptide directing secretion. The chain crosses the membrane as a helical span at residues 192–212 (IIAAVSGVAILMAIVLLLLGL).

It localises to the membrane. This is an uncharacterized protein from Homo sapiens (Human).